An 871-amino-acid chain; its full sequence is MIKKFDKKDEESGSGSNPFRHLEKSAVLQEARIFNETPINPRRCLHILTKILYLLNQGEHFGTTEATEAFFAMTRLFQSNDQTLRRMCYLTIKEMATISEDVIIVTSSLTKDMTGKEDVYRGPAIRALCRITDGTMLQAIERYMKQAIVDKVSSVSSSALVSSLHMMKISYDVVKRWVNEAQEAASSDNIMVQYHALGVLYHLKKNDRLAVSKMLNKFTKSGLKSQFAYCMLIRIASRLLKENEEGHESPVFDFIESCLRNKHEMVIYEAASAIIHLPNCTARELAPAVSVLQLFCSSPKPALRYAAVRTLNKVAMKHPSAVTACNLDLENLITDSNRSIATLAITTLLKTGSESSVDRLMKQISSFVSEISDEFKVVVVQAISALCQKYPRKHSVMMTFLSNMLRDDGGFEYKRAIVDCIIHIVEENPESKEAGLAHLCEFIEDCEHTVLATKILHLLGKEGPRTPVPSKYIRFIFNRVVLENEAVRAAAVSALAKFGAQNENLLPSILVLLQRCMMDTDDEVRDRATFYLNVLQQRQMALNATYIFNGLTVSVPGMEKALHQYTLEPSEKPFDMKSIPLATAPVFEQKAEITLVSTKPEKLAPSRQDIFQEQLAAIPEFMNLGPLFKSSEPVQLTEAETEYFVRCVKHMFTNHIVFQFDCTNTLNDQLLEKVTVQVEPSEAYEVLCCVPAPSLPYNQPGVCYTLVRLPEDDSIAAAGTFSCTMKFTVRDCDPDTGVPTEEGYDDEYVLEDLEVTVSDHIQKVMKPNFAAAWEEVGNTFEKEETFALSSTKTLEEAVNNIITFLGMQPCERSDKVPENKNSHSLYLAGVYRGGYDLLVRSRLALADGVTMQVTVRSKEGTPVDVILASVG.

A compositionally biased stretch (basic and acidic residues) spans 1–11 (MIKKFDKKDEE). Residues 1 to 20 (MIKKFDKKDEESGSGSNPFR) are disordered. HEAT repeat units lie at residues 64–101 (TEAT…ISED), 283–320 (RELA…KHPS), 321–355 (AVTA…GSES), 356–392 (SVDR…KYPR), 395–430 (SVMM…ENPE), and 467–504 (PVPS…QNEN). Thr594 is modified (phosphothreonine).

This sequence belongs to the COPG family. As to quaternary structure, oligomeric complex. Binds to CDC42. Interacts with JAGN1. Interacts with TMED10 (via cytoplasmic domain).

It localises to the cytoplasm. Its subcellular location is the cytosol. The protein resides in the golgi apparatus membrane. It is found in the cytoplasmic vesicle. The protein localises to the COPI-coated vesicle membrane. The coatomer is a cytosolic protein complex that binds to dilysine motifs and reversibly associates with Golgi non-clathrin-coated vesicles, which further mediate biosynthetic protein transport from the ER, via the Golgi up to the trans Golgi network. Coatomer complex is required for budding from Golgi membranes, and is essential for the retrograde Golgi-to-ER transport of dilysine-tagged proteins. In mammals, the coatomer can only be recruited by membranes associated to ADP-ribosylation factors (ARFs), which are small GTP-binding proteins; the complex also influences the Golgi structural integrity, as well as the processing, activity, and endocytic recycling of LDL receptors. In Bos taurus (Bovine), this protein is Coatomer subunit gamma-2 (COPG2).